Reading from the N-terminus, the 489-residue chain is uncharacterized protein (489 aa).

Transmembrane regions (helical) follow at residues 29–49 (FIAS…TGLG), 67–87 (LLYA…KYLG), 90–110 (WALA…WYFD), 119–139 (IFTG…TAYI), 152–172 (FIAT…FIAF), 186–206 (AVYI…ILFI), 276–296 (LNNV…TLIL), 308–328 (IIGL…ELGW), 351–371 (GGAL…IVSV), 397–417 (AAGM…LGQG), and 418–438 (IIYF…TSIF).

The protein localises to the membrane. This is an uncharacterized protein from Schizosaccharomyces pombe (strain 972 / ATCC 24843) (Fission yeast).